The primary structure comprises 545 residues: Leucine-rich repeat LGI family member 2 (545 aa).

Positions 1-28 (MALRRGGCGALGLLLLLLGAACLIPRSA) are cleaved as a signal peptide. Residues 29–65 (QVRRLARCPATCSCTKESIICVGSSWVPRIVPGDISS) form the LRRNT domain. N70 is a glycosylation site (N-linked (GlcNAc...) asparagine). LRR repeat units lie at residues 86–107 (SLQL…AFAG), 110–131 (HLEY…AFRG), and 134–155 (DLTH…VFSD). Positions 167–217 (NKFECDCKAKWLYLWLKMTNSTVSDVLCIGPPEYQEKKLNDVTSFDYECTT) constitute an LRRCT domain. N186 carries N-linked (GlcNAc...) asparagine glycosylation. EAR repeat units follow at residues 219 to 261 (DFVV…EWDH), 265 to 307 (NFRS…KYDE), 311 to 358 (KFVK…KWNS), 360 to 403 (GFYS…QWNK), 407 to 450 (KFVP…RWNS), 452 to 494 (QFVE…QWDK), and 498 to 540 (LFKK…EHII). N-linked (GlcNAc...) asparagine glycosylation occurs at N271. N402 carries an N-linked (GlcNAc...) asparagine glycan.

As to expression, brain, heart and placenta.

The protein resides in the secreted. Functionally, required for the development of soma-targeting inhibitory GABAergic synapses made by parvalbumin-positive basket cells. This is Leucine-rich repeat LGI family member 2 (LGI2) from Homo sapiens (Human).